Reading from the N-terminus, the 957-residue chain is Collagen alpha-1(I) chain (957 aa).

The tract at residues 1–957 (GPMGPSGPRG…PGPPGPPGPP (957 aa)) is disordered. A compositionally biased stretch (low complexity) spans 23–33 (FPGEPGASGPM). Over residues 45–59 (NGDDGEAGKPGRPGE) the composition is skewed to basic and acidic residues. At S87 the chain carries Phosphoserine. Low complexity-rich tracts occupy residues 95–113 (DAGPAGPKGAPGQMGPRGI) and 125–138 (PAGARGNDGATGAA). The segment covering 140-152 (PPGPTGPAGPPGF) has biased composition (pro residues). 2 stretches are compositionally biased toward low complexity: residues 186–210 (AGAAGANGAPGIAGAPGFPGARGPS) and 219–228 (SGPKGNSGEP). Positions 277 to 286 (GERGGPGSRG) are enriched in gly residues. Composition is skewed to low complexity over residues 330–356 (KGITGSPGSPGPDGKTGPPGPAGQDGR), 365–384 (ARGQAGVMGFPGPKGAAGEP), 426–453 (QGPAGSPGFQGIPGPAGPPGEAGKPGEQ), 488–516 (PRGANGAPGNDGAKGDAGAPGAPGSQGAP), 576–590 (AGPSGPAGPTGARGA), 603–618 (AGFAGPPGADGQPGAK), 649–665 (SAGPPGATGFPGAAGRV), and 707–731 (AGEKGAPGADGPAGAPGTPGPQGIA). Residue S579 is modified to Phosphoserine. Composition is skewed to pro residues over residues 772–782 (PPGPMGPPGIA) and 818–833 (AGPPGAPGAPGAPGPV). Residues 854–868 (IGPVGARGAAGPQGP) are compositionally biased toward low complexity. Basic and acidic residues predominate over residues 869–883 (RGDKGETGEQGDRGI). Positions 902 to 935 (PGEQGPSGASGPAGPRGPPGSAGSPGKDGINGIP) are enriched in low complexity. Positions 937–957 (PIGPPGPRPGPPGPPGPPGPP) are enriched in pro residues.

Belongs to the fibrillar collagen family. In terms of assembly, trimers of one alpha 2(I) and two alpha 1(I) chains. In terms of processing, prolines at the third position of the tripeptide repeating unit (G-X-Y) are hydroxylated in some or all of the chains. Forms the fibrils of tendon, ligaments and bones. In bones, the fibrils are mineralized with calcium hydroxyapatite.

Its subcellular location is the secreted. It is found in the extracellular space. It localises to the extracellular matrix. Functionally, type I collagen is a member of group I collagen (fibrillar forming collagen). This Hippopotamus amphibius (Hippopotamus) protein is Collagen alpha-1(I) chain.